Consider the following 224-residue polypeptide: Large ribosomal subunit protein uL1 (224 aa).

The protein belongs to the universal ribosomal protein uL1 family. In terms of assembly, part of the 50S ribosomal subunit.

In terms of biological role, binds directly to 23S rRNA. The L1 stalk is quite mobile in the ribosome, and is involved in E site tRNA release. Its function is as follows. Protein L1 is also a translational repressor protein, it controls the translation of the L11 operon by binding to its mRNA. The polypeptide is Large ribosomal subunit protein uL1 (Borrelia duttonii (strain Ly)).